The sequence spans 78 residues: Probable [Fe-S]-dependent transcriptional repressor (78 aa).

Iron-sulfur cluster is bound by residues Cys-56, Cys-61, Cys-64, and Cys-70.

The protein belongs to the FeoC family.

May function as a transcriptional regulator that controls feoABC expression. The chain is Probable [Fe-S]-dependent transcriptional repressor from Salmonella heidelberg (strain SL476).